The sequence spans 892 residues: Alanine--tRNA ligase (892 aa).

Zn(2+)-binding residues include His577, His581, Cys680, and His684.

The protein belongs to the class-II aminoacyl-tRNA synthetase family. It depends on Zn(2+) as a cofactor.

The protein localises to the cytoplasm. The enzyme catalyses tRNA(Ala) + L-alanine + ATP = L-alanyl-tRNA(Ala) + AMP + diphosphate. In terms of biological role, catalyzes the attachment of alanine to tRNA(Ala) in a two-step reaction: alanine is first activated by ATP to form Ala-AMP and then transferred to the acceptor end of tRNA(Ala). Also edits incorrectly charged Ser-tRNA(Ala) and Gly-tRNA(Ala) via its editing domain. The protein is Alanine--tRNA ligase of Arthrobacter sp. (strain FB24).